The following is a 109-amino-acid chain: Class I hydrophobin G (109 aa).

The first 19 residues, Met-1–Ala-19, serve as a signal peptide directing secretion. 4 disulfides stabilise this stretch: Cys-36–Cys-90, Cys-42–Cys-84, Cys-43–Cys-76, and Cys-91–Cys-105.

Belongs to the fungal hydrophobin family.

The protein resides in the secreted. It is found in the cell wall. In terms of biological role, aerial growth, conidiation, and dispersal of filamentous fungi in the environment rely upon a capability of their secreting small amphipathic proteins called hydrophobins (HPBs) with low sequence identity. Class I can self-assemble into an outermost layer of rodlet bundles on aerial cell surfaces, conferring cellular hydrophobicity that supports fungal growth, development and dispersal; whereas Class II form highly ordered films at water-air interfaces through intermolecular interactions but contribute nothing to the rodlet structure. In P.expansum, hydrophobins contribute to germination, tolerance to cold stress and mycotoxins patulin and citrinin production. The polypeptide is Class I hydrophobin G (Penicillium expansum (Blue mold rot fungus)).